We begin with the raw amino-acid sequence, 507 residues long: Probable malate:quinone oxidoreductase 2 (507 aa).

The protein belongs to the MQO family. The cofactor is FAD.

It catalyses the reaction (S)-malate + a quinone = a quinol + oxaloacetate. Its pathway is carbohydrate metabolism; tricarboxylic acid cycle; oxaloacetate from (S)-malate (quinone route): step 1/1. In Pseudomonas aeruginosa (strain ATCC 15692 / DSM 22644 / CIP 104116 / JCM 14847 / LMG 12228 / 1C / PRS 101 / PAO1), this protein is Probable malate:quinone oxidoreductase 2.